Consider the following 181-residue polypeptide: Crustacyanin-A1 subunit (181 aa).

3 cysteine pairs are disulfide-bonded: C12–C121, C51–C173, and C117–C150.

The protein belongs to the calycin superfamily. Lipocalin family. In terms of assembly, oligomer; Can form dimers (beta-crustacyanin); or complexes of 16 subunits (alpha-crustacyanin). There are five types of subunits: A1, A2, A3, C1 and C2. As to expression, found in the carapace.

It is found in the secreted. It localises to the extracellular space. Its function is as follows. Binds the carotenoid astaxanthin (AXT) which provides the blue coloration to the carapace of the lobster. In Homarus gammarus (European lobster), this protein is Crustacyanin-A1 subunit.